A 333-amino-acid polypeptide reads, in one-letter code: Phosphate acyltransferase (333 aa).

Belongs to the PlsX family. Homodimer. Probably interacts with PlsY.

The protein resides in the cytoplasm. It carries out the reaction a fatty acyl-[ACP] + phosphate = an acyl phosphate + holo-[ACP]. The protein operates within lipid metabolism; phospholipid metabolism. Its function is as follows. Catalyzes the reversible formation of acyl-phosphate (acyl-PO(4)) from acyl-[acyl-carrier-protein] (acyl-ACP). This enzyme utilizes acyl-ACP as fatty acyl donor, but not acyl-CoA. In Thermosipho melanesiensis (strain DSM 12029 / CIP 104789 / BI429), this protein is Phosphate acyltransferase.